Consider the following 129-residue polypeptide: UPF0146 protein VNG_2609C (129 aa).

This sequence belongs to the UPF0146 family.

This is UPF0146 protein VNG_2609C from Halobacterium salinarum (strain ATCC 700922 / JCM 11081 / NRC-1) (Halobacterium halobium).